We begin with the raw amino-acid sequence, 171 residues long: Ribosome maturation factor RimM (171 aa).

In terms of domain architecture, PRC barrel spans 97-170 (EGEYYYHEII…LVTIHVMEGL (74 aa)).

Belongs to the RimM family. Binds ribosomal protein uS19.

Its subcellular location is the cytoplasm. Its function is as follows. An accessory protein needed during the final step in the assembly of 30S ribosomal subunit, possibly for assembly of the head region. Essential for efficient processing of 16S rRNA. May be needed both before and after RbfA during the maturation of 16S rRNA. It has affinity for free ribosomal 30S subunits but not for 70S ribosomes. This chain is Ribosome maturation factor RimM, found in Bacillus thuringiensis (strain Al Hakam).